The following is a 335-amino-acid chain: Mycobacterial beta-ketoacyl-[acyl-carrier-protein] synthase III (335 aa).

Active-site residues include Cys122 and His258. The interval 259–263 is ACP-binding; sequence QANSR. Asn289 is an active-site residue.

The protein belongs to the thiolase-like superfamily. FabH family. In terms of assembly, homodimer.

The protein localises to the cytoplasm. It carries out the reaction malonyl-[ACP] + dodecanoyl-CoA + H(+) = 3-oxotetradecanoyl-[ACP] + CO2 + CoA. Its pathway is lipid metabolism; fatty acid biosynthesis. It participates in lipid metabolism; mycolic acid biosynthesis. Catalyzes the condensation reaction of fatty acid synthesis by the addition to an acyl acceptor of two carbons from malonyl-ACP. Catalyzes the first condensation reaction which initiates fatty acid synthesis and may therefore play a role in governing the total rate of fatty acid production. Possesses both acetoacetyl-ACP synthase and acetyl transacylase activities. Its substrate specificity determines the biosynthesis of branched-chain and/or straight-chain of fatty acids. The chain is Mycobacterial beta-ketoacyl-[acyl-carrier-protein] synthase III from Mycobacterium bovis (strain ATCC BAA-935 / AF2122/97).